A 433-amino-acid polypeptide reads, in one-letter code: Trigger factor (433 aa).

Residues 163–248 form the PPIase FKBP-type domain; sequence GDVVVLDFAA…VHAVKERRLP (86 aa).

Belongs to the FKBP-type PPIase family. Tig subfamily.

The protein localises to the cytoplasm. It catalyses the reaction [protein]-peptidylproline (omega=180) = [protein]-peptidylproline (omega=0). Involved in protein export. Acts as a chaperone by maintaining the newly synthesized protein in an open conformation. Functions as a peptidyl-prolyl cis-trans isomerase. The sequence is that of Trigger factor from Nitratidesulfovibrio vulgaris (strain ATCC 29579 / DSM 644 / CCUG 34227 / NCIMB 8303 / VKM B-1760 / Hildenborough) (Desulfovibrio vulgaris).